The primary structure comprises 133 residues: Fluoride-specific ion channel FluC 3 (133 aa).

3 helical membrane passes run 7–27 (ILVL…SGYV), 37–57 (WGTF…AGLG), and 60–80 (LGAI…LLGG). Residues G79 and T82 each coordinate Na(+). The chain crosses the membrane as a helical span at residues 107 to 127 (IVASALLCVLAVAAGYGGIMW).

This sequence belongs to the fluoride channel Fluc/FEX (TC 1.A.43) family.

It is found in the cell inner membrane. It catalyses the reaction fluoride(in) = fluoride(out). Its activity is regulated as follows. Na(+) is not transported, but it plays an essential structural role and its presence is essential for fluoride channel function. In terms of biological role, fluoride-specific ion channel. Important for reducing fluoride concentration in the cell, thus reducing its toxicity. In Brucella suis biovar 1 (strain 1330), this protein is Fluoride-specific ion channel FluC 3.